The primary structure comprises 745 residues: Elongation factor G, mitochondrial (745 aa).

Residues 40–317 (EKIRNIGISA…AVLDYLPNPG (278 aa)) enclose the tr-type G domain. GTP-binding positions include 49 to 56 (AHIDSGKT), 116 to 120 (DTPGH), and 170 to 173 (NKLD).

The protein belongs to the TRAFAC class translation factor GTPase superfamily. Classic translation factor GTPase family. EF-G/EF-2 subfamily.

It localises to the mitochondrion. It participates in protein biosynthesis; polypeptide chain elongation. Its function is as follows. Mitochondrial GTPase that catalyzes the GTP-dependent ribosomal translocation step during translation elongation. During this step, the ribosome changes from the pre-translocational (PRE) to the post-translocational (POST) state as the newly formed A-site-bound peptidyl-tRNA and P-site-bound deacylated tRNA move to the P and E sites, respectively. Catalyzes the coordinated movement of the two tRNA molecules, the mRNA and conformational changes in the ribosome. Essential during development as it acts as a retrograde signal from mitochondria to the nucleus to slow down cell proliferation if mitochondrial energy output is low. In Drosophila willistoni (Fruit fly), this protein is Elongation factor G, mitochondrial.